The primary structure comprises 57 residues: Large ribosomal subunit protein bL32c (57 aa).

The protein belongs to the bacterial ribosomal protein bL32 family.

It localises to the plastid. It is found in the chloroplast. The protein is Large ribosomal subunit protein bL32c of Acorus calamus (Sweet flag).